The chain runs to 495 residues: Glycerol kinase (495 aa).

Position 11 (threonine 11) interacts with ADP. Threonine 11, threonine 12, and serine 13 together coordinate ATP. A sn-glycerol 3-phosphate-binding site is contributed by threonine 11. Arginine 15 contacts ADP. Positions 81, 82, 133, and 242 each coordinate sn-glycerol 3-phosphate. Glycerol is bound by residues arginine 81, glutamate 82, tyrosine 133, aspartate 242, and glutamine 243. Residues threonine 264 and glycine 307 each coordinate ADP. ATP-binding residues include threonine 264, glycine 307, glutamine 311, and glycine 408. Residues glycine 408 and asparagine 412 each contribute to the ADP site.

It belongs to the FGGY kinase family.

It carries out the reaction glycerol + ATP = sn-glycerol 3-phosphate + ADP + H(+). Its pathway is polyol metabolism; glycerol degradation via glycerol kinase pathway; sn-glycerol 3-phosphate from glycerol: step 1/1. With respect to regulation, inhibited by fructose 1,6-bisphosphate (FBP). In terms of biological role, key enzyme in the regulation of glycerol uptake and metabolism. Catalyzes the phosphorylation of glycerol to yield sn-glycerol 3-phosphate. The chain is Glycerol kinase from Citrifermentans bemidjiense (strain ATCC BAA-1014 / DSM 16622 / JCM 12645 / Bem) (Geobacter bemidjiensis).